Here is a 480-residue protein sequence, read N- to C-terminus: Cysteine--tRNA ligase (480 aa).

Residue C29 coordinates Zn(2+). Positions 31-41 (PTVYADPHLGH) match the 'HIGH' region motif. 3 residues coordinate Zn(2+): C220, H245, and E249. The 'KMSKS' region signature appears at 276–280 (KMAKS). K279 is an ATP binding site.

The protein belongs to the class-I aminoacyl-tRNA synthetase family. Monomer. It depends on Zn(2+) as a cofactor.

It is found in the cytoplasm. The enzyme catalyses tRNA(Cys) + L-cysteine + ATP = L-cysteinyl-tRNA(Cys) + AMP + diphosphate. The chain is Cysteine--tRNA ligase from Thermus thermophilus (strain ATCC 27634 / DSM 579 / HB8).